The primary structure comprises 2382 residues: Nonribosomal peptide synthetase chyA (2382 aa).

The tract at residues 204 to 607 is adenylation 1; sequence QKCATQPESI…LGRKDHQVKI (404 aa). One can recognise a Carrier 1 domain in the interval 745–821; that stretch reads TPTTQNQRIL…DMASVLVKDH (77 aa). Position 782 is an O-(pantetheine 4'-phosphoryl)serine (serine 782). The condensation 1 stretch occupies residues 857–1269; it reads EDVYPCTHMQ…LVPPEDMATL (413 aa). Residues 1294-1687 form an adenylation 2 region; sequence GQPDTLAIHS…VGRKDDQVKL (394 aa). The region spanning 1833–1909 is the Carrier 2 domain; the sequence is VPVSIHGRKV…GLSLKCATEN (77 aa). Serine 1870 is modified (O-(pantetheine 4'-phosphoryl)serine). Positions 1967–2373 are condensation 2; sequence MTLHNFYSRY…FSDVIESLAS (407 aa).

The protein belongs to the NRP synthetase family.

Its pathway is pigment biosynthesis. Its function is as follows. Nonribosomal peptide synthetase; part of the gene cluster that mediates the biosynthesis of the yellow pigment chrysogine. the NRPS chyA mediates the condensation of anthranilic acid and alanine into the intermediate 2-(2-aminopropanamido)benzoic acid. The remainder of the pathway is highly branched yielding at least 13 chrysogine-related compounds. The malonyl transferase chyE converts 2-(2-aminopropanamido)benzoic acid and 2-(2-aminopropanamido)benzamidine into 2-(2-(2-carboxyacetamido)propanamido)benzoic acid and 3-((1-((2-carbamoylphenyl)amino)-1-oxopropan-2-yl)amino)-3-oxopropanoic acid, respectively. ChyD is an amidase, being responsible for the amidation of the carboxylic acid moiety of 2-(2-aminopropanamido)benzoic acid, 2-(2-(2-carboxyacetamido)propanamido)benzoic acid and 2-(2-((4-amino-1-carboxy-4-oxobutyl)amino)propanamido)benzoic acid. ChyC is involved in the same reactions as ChyD, but plays a more minor role in the amidation reactions compared to chyD. The oxidoreductases chyH and chyM are involved in oxidation reactions that form N-pyruvoylanthranilamide from 2-(2-aminopropanamido)benzamidine and (1-((2-carbamoylphenyl)amino)-1-oxopropan-2-yl)glutamine, respectively. N-pyruvoylanthranilamide is further converted via two further branches in the pathway, yielding chrysogine and additional chrysogine-related coumpounds. Chrysogine is likely formed by a spontaneous ring closure from N-pyruvoylanthranilamide. The polypeptide is Nonribosomal peptide synthetase chyA (Penicillium rubens (strain ATCC 28089 / DSM 1075 / NRRL 1951 / Wisconsin 54-1255) (Penicillium chrysogenum)).